A 599-amino-acid polypeptide reads, in one-letter code: MQKNIRNFSIIAHIDHGKSTLADRLLHLTGALSDREMKEQFLDKMELEREKGITIKLKPVRLNYRARDGQEYILNLIDTPGHVDFSYEVSRSLAACEGALLVVDASQGIEAQTLANVYMAMDLDLEIIGVVNKIDLPGAEPEVVKQEMENVLGLDQDEVLPISAKLGTGVEDVLEAIVERIPPPSGDKEAALKALIFDSYFDPYKGAISYIRVVEGELRQGDMIRMMSSGKEYEVDEIGVLSPYMTEVEVLSSGEVGYVAAGMKNVNDTRVGDTITGARRAAPEALSGYQEVKPMVYCGLYPLENSEFERLRDALDRLKLNDASLFYEPDNSDALGFGFRCGFLGLLHLEIVKERLEREYDLSLLATAPSVIYRVLLTDGSELMVQNPTHWPPPQKIDRVMEPYVKASIMVPNDYVGTIMELCQEKRGSFITMEYLTSHRVVINYRLPLAEILYDFFDALKSRTRGYASLDYEFHGFDTSDLIKLDIMLNGEVVDALSFIVHEDKAYYRARAIVNKLRKIIPRQMYEVAIQAAIGNRILARENIKAMRKDVLAKCYGGDITRKKKLLEKQKEGKKRMKQIGRVEVPKDAFMTVLDIEND.

The 183-residue stretch at 3 to 185 folds into the tr-type G domain; that stretch reads KNIRNFSIIA…AIVERIPPPS (183 aa). GTP contacts are provided by residues 15-20 and 132-135; these read DHGKST and NKID.

It belongs to the TRAFAC class translation factor GTPase superfamily. Classic translation factor GTPase family. LepA subfamily.

The protein localises to the cell membrane. The catalysed reaction is GTP + H2O = GDP + phosphate + H(+). In terms of biological role, required for accurate and efficient protein synthesis under certain stress conditions. May act as a fidelity factor of the translation reaction, by catalyzing a one-codon backward translocation of tRNAs on improperly translocated ribosomes. Back-translocation proceeds from a post-translocation (POST) complex to a pre-translocation (PRE) complex, thus giving elongation factor G a second chance to translocate the tRNAs correctly. Binds to ribosomes in a GTP-dependent manner. This is Elongation factor 4 from Syntrophomonas wolfei subsp. wolfei (strain DSM 2245B / Goettingen).